The following is a 155-amino-acid chain: Ribosome maturation factor RimP (155 aa).

Belongs to the RimP family.

It localises to the cytoplasm. Required for maturation of 30S ribosomal subunits. This chain is Ribosome maturation factor RimP, found in Parabacteroides distasonis (strain ATCC 8503 / DSM 20701 / CIP 104284 / JCM 5825 / NCTC 11152).